We begin with the raw amino-acid sequence, 360 residues long: Tryptophan--tRNA ligase, mitochondrial (360 aa).

The transit peptide at 1–18 (MALFSVRKARECWRFIRA) directs the protein to the mitochondrion. ATP-binding positions include Gln42 and 48–51 (HLGN). Asp167 contributes to the L-tryptophan binding site. ATP is bound by residues 179–181 (GED), Val217, and 226–230 (KMSKS).

It belongs to the class-I aminoacyl-tRNA synthetase family.

The protein resides in the mitochondrion matrix. It localises to the mitochondrion. It catalyses the reaction tRNA(Trp) + L-tryptophan + ATP = L-tryptophyl-tRNA(Trp) + AMP + diphosphate + H(+). In terms of biological role, catalyzes the attachment of tryptophan to tRNA(Trp) in a two-step reaction: tryptophan is first activated by ATP to form Trp-AMP and then transferred to the acceptor end of tRNA(Trp). This is Tryptophan--tRNA ligase, mitochondrial (Wars2) from Mus musculus (Mouse).